We begin with the raw amino-acid sequence, 337 residues long: Thymidylate synthase (337 aa).

DUMP is bound by residues Arg-74 and 199–200 (RR). Residue Cys-219 is the Nucleophile of the active site. DUMP-binding positions include 239–242 (RSGD), Asn-250, and 280–282 (HIY). Asp-242 is a (6R)-5,10-methylene-5,6,7,8-tetrahydrofolate binding site. Ala-336 serves as a coordination point for (6R)-5,10-methylene-5,6,7,8-tetrahydrofolate.

This sequence belongs to the thymidylate synthase family. As to quaternary structure, homodimer.

The catalysed reaction is dUMP + (6R)-5,10-methylene-5,6,7,8-tetrahydrofolate = 7,8-dihydrofolate + dTMP. Its pathway is pyrimidine metabolism; dTTP biosynthesis. This Homo sapiens (Human) protein is Thymidylate synthase (70).